Reading from the N-terminus, the 404-residue chain is Tryptophan synthase beta chain (404 aa).

Lysine 98 is modified (N6-(pyridoxal phosphate)lysine).

Belongs to the TrpB family. In terms of assembly, tetramer of two alpha and two beta chains. Pyridoxal 5'-phosphate is required as a cofactor.

The catalysed reaction is (1S,2R)-1-C-(indol-3-yl)glycerol 3-phosphate + L-serine = D-glyceraldehyde 3-phosphate + L-tryptophan + H2O. The protein operates within amino-acid biosynthesis; L-tryptophan biosynthesis; L-tryptophan from chorismate: step 5/5. In terms of biological role, the beta subunit is responsible for the synthesis of L-tryptophan from indole and L-serine. In Methanocaldococcus jannaschii (strain ATCC 43067 / DSM 2661 / JAL-1 / JCM 10045 / NBRC 100440) (Methanococcus jannaschii), this protein is Tryptophan synthase beta chain (trpB).